Consider the following 422-residue polypeptide: Zinc finger protein Gfi-1 (422 aa).

The SNAG domain stretch occupies residues 1 to 20 (MPRSFLVKSKKAHSYHQPRS). The interval 1 to 109 (MPRSFLVKSK…ASEKSMCPSL (109 aa)) is disordered. A phosphoserine mark is found at S20 and S56. Positions 140–257 (RPCGALERGA…LLLGGGSYKC (118 aa)) are required for interaction with RELA. 6 consecutive C2H2-type zinc fingers follow at residues 255 to 278 (YKCI…RRSH), 284 to 306 (FACE…KAVH), 312 to 334 (FDCK…LLIH), 340 to 362 (YPCQ…TFIH), 368 to 390 (HKCQ…SRKH), and 396 to 419 (FGCD…ETQH).

Interacts with U2AF1L4. Component of RCOR-GFI-KDM1A-HDAC complexes. Interacts directly with RCOR1, KDM1A and HDAC2. Also interacts with HDAC1. Interacts (via the zinc-finger domain) with ARIH2; the interaction prevents GFI1 ubiquitination and proteasomal degradation. Interacts with PIAS3; the interaction relieves the inhibitory effect of PIAS3 on STAT3-mediated transcriptional activity. Forms a complex with EHMT2 and HDAC1 to promote 'Lys-9' dimethylation of H3 (H3K9Me2) and repress expression of target genes. Interacts directly with EHMT2. Component of the GFI1-AJUBA-HDAC1 repressor complex. Interacts directly with AJUBA (via ITS LIM domains); the interaction results in the HDAC-dependent corepression of a subset of GFI1 target genes and, occurs independently of the SNAG domain. Interacts with SPI1; the interaction inhibits SPI1 transcriptional activity targeted at macrophage-specific genes, repressing macrophage differentiation of myeloid progenitor cells and promoting granulocyte commitment. Interacts with RUNX1T1; the interaction represses HDAC-mediated transcriptional activity. Interacts with RELA; the interaction occurs on liposaccharide (LPS) stimulation and controls RELA DNA binding activity and regulates endotoxin-mediated TOLL-like receptor inflammatory response. Interacts (via the C-terminal zinc fingers) with ZBTB17; the interaction results in the recruitment of GFI1 to the CDKN1A/p21 and CDKN1B promoters and repression of transcription. Ubiquitinated. Ubiquitination and degradation by the proteasome is inhibited by the ubiquitin ligase, ARIH2.

Its subcellular location is the nucleus. In terms of biological role, transcription repressor essential for hematopoiesis. Functions in a cell-context and development-specific manner. Binds to 5'-TAAATCAC[AT]GCA-3' in the promoter region of a large number of genes. Component of several complexes, including the EHMT2-GFI1-HDAC1, AJUBA-GFI1-HDAC1 and RCOR-GFI-KDM1A-HDAC complexes, that suppress, via histone deacetylase (HDAC) recruitment, a number of genes implicated in multilineage blood cell development. Regulates neutrophil differentiation, promotes proliferation of lymphoid cells, and is required for granulocyte development. Inhibits SPI1 transcriptional activity at macrophage-specific genes, repressing macrophage differentiation of myeloid progenitor cells and promoting granulocyte commitment. Mediates, together with U2AF1L4, the alternative splicing of CD45 and controls T-cell receptor signaling. Regulates the endotoxin-mediated Toll-like receptor (TLR) inflammatory response by antagonizing RELA. Cooperates with CBFA2T2 to regulate ITGB1-dependent neurite growth. Controls cell-cycle progression by repressing CDKNIA/p21 transcription in response to TGFB1 via recruitment of GFI1 by ZBTB17 to the CDKNIA/p21 and CDKNIB promoters. Required for the maintenance of inner ear hair cells. In addition to its role in transcription, acts as a substrate adapter for PRMT1 in the DNA damage response: facilitates the recognition of TP53BP1 and MRE11 substrates by PRMT1, promoting their methylation and the DNA damage response. In Homo sapiens (Human), this protein is Zinc finger protein Gfi-1 (GFI1).